Consider the following 664-residue polypeptide: DNA ligase (664 aa).

Residues 31–35 (DYEFD), 80–81 (SL), and Glu-110 each bind NAD(+). The active-site N6-AMP-lysine intermediate is Lys-112. 2 residues coordinate NAD(+): Arg-133 and Glu-169. One can recognise a BRCT 1 domain in the interval 237–257 (LEKARKWGFKVPAESELKDSI). The NAD(+) site is built by Lys-284 and Lys-308. The Zn(2+) site is built by Cys-402, Cys-405, Cys-420, and Cys-426. One can recognise a BRCT 2 domain in the interval 586-664 (NQTNILEGNT…SEEDFLKMLE (79 aa)).

It belongs to the NAD-dependent DNA ligase family. LigA subfamily. Requires Mg(2+) as cofactor. It depends on Mn(2+) as a cofactor.

The catalysed reaction is NAD(+) + (deoxyribonucleotide)n-3'-hydroxyl + 5'-phospho-(deoxyribonucleotide)m = (deoxyribonucleotide)n+m + AMP + beta-nicotinamide D-nucleotide.. Functionally, DNA ligase that catalyzes the formation of phosphodiester linkages between 5'-phosphoryl and 3'-hydroxyl groups in double-stranded DNA using NAD as a coenzyme and as the energy source for the reaction. It is essential for DNA replication and repair of damaged DNA. The sequence is that of DNA ligase from Christiangramia forsetii (strain DSM 17595 / CGMCC 1.15422 / KT0803) (Gramella forsetii).